The chain runs to 120 residues: UPF0231 protein YE0706 (120 aa).

It belongs to the UPF0231 family.

This is UPF0231 protein YE0706 from Yersinia enterocolitica serotype O:8 / biotype 1B (strain NCTC 13174 / 8081).